Here is a 146-residue protein sequence, read N- to C-terminus: Large ribosomal subunit protein uL24 (146 aa).

The segment at 1–33 is disordered; sequence MKYNPRVTSSRRRNRKPHFTASSSERRVXMSSP. Positions 9 to 18 are enriched in basic residues; the sequence is SSRRRNRKPH.

This sequence belongs to the universal ribosomal protein uL24 family.

This is Large ribosomal subunit protein uL24 (RPL26) from Brassica campestris (Field mustard).